The chain runs to 361 residues: Ribosomal RNA small subunit methyltransferase H (361 aa).

S-adenosyl-L-methionine is bound by residues 54–56 (GGH), aspartate 74, tyrosine 101, aspartate 122, and glutamine 129. Residues 318 to 361 (ARNSRASSAKLRAAQRLAEGQAPRPRRRNKYAPEGRDEPEGGAA) are disordered. Over residues 348–361 (YAPEGRDEPEGGAA) the composition is skewed to basic and acidic residues.

The protein belongs to the methyltransferase superfamily. RsmH family.

The protein resides in the cytoplasm. The catalysed reaction is cytidine(1402) in 16S rRNA + S-adenosyl-L-methionine = N(4)-methylcytidine(1402) in 16S rRNA + S-adenosyl-L-homocysteine + H(+). Functionally, specifically methylates the N4 position of cytidine in position 1402 (C1402) of 16S rRNA. This Nitratidesulfovibrio vulgaris (strain DSM 19637 / Miyazaki F) (Desulfovibrio vulgaris) protein is Ribosomal RNA small subunit methyltransferase H.